Reading from the N-terminus, the 311-residue chain is Ribonuclease HIII (311 aa).

One can recognise an RNase H type-2 domain in the interval 95-311 (MSIVGSDEVG…NTEKAFRLLK (217 aa)). A divalent metal cation-binding residues include Asp101, Glu102, and Asp206.

It belongs to the RNase HII family. RnhC subfamily. Requires Mn(2+) as cofactor. Mg(2+) serves as cofactor.

The protein resides in the cytoplasm. It carries out the reaction Endonucleolytic cleavage to 5'-phosphomonoester.. Its function is as follows. Endonuclease that specifically degrades the RNA of RNA-DNA hybrids. This is Ribonuclease HIII from Bacillus cereus (strain ZK / E33L).